The chain runs to 477 residues: Aspartyl/glutamyl-tRNA(Asn/Gln) amidotransferase subunit B (477 aa).

This sequence belongs to the GatB/GatE family. GatB subfamily. As to quaternary structure, heterotrimer of A, B and C subunits.

The enzyme catalyses L-glutamyl-tRNA(Gln) + L-glutamine + ATP + H2O = L-glutaminyl-tRNA(Gln) + L-glutamate + ADP + phosphate + H(+). It catalyses the reaction L-aspartyl-tRNA(Asn) + L-glutamine + ATP + H2O = L-asparaginyl-tRNA(Asn) + L-glutamate + ADP + phosphate + 2 H(+). Allows the formation of correctly charged Asn-tRNA(Asn) or Gln-tRNA(Gln) through the transamidation of misacylated Asp-tRNA(Asn) or Glu-tRNA(Gln) in organisms which lack either or both of asparaginyl-tRNA or glutaminyl-tRNA synthetases. The reaction takes place in the presence of glutamine and ATP through an activated phospho-Asp-tRNA(Asn) or phospho-Glu-tRNA(Gln). The sequence is that of Aspartyl/glutamyl-tRNA(Asn/Gln) amidotransferase subunit B from Ureaplasma parvum serovar 3 (strain ATCC 27815 / 27 / NCTC 11736).